The sequence spans 101 residues: MVKRLTDEDRHAALRELPGWSAAEGREAIARTFVFKDFNEAFGFMARVALIAEKHDHHPEWRNVYKTVEVVLTTHDAGGVTARDIDLARAMNAIAAQLSPR.

This sequence belongs to the pterin-4-alpha-carbinolamine dehydratase family.

The enzyme catalyses (4aS,6R)-4a-hydroxy-L-erythro-5,6,7,8-tetrahydrobiopterin = (6R)-L-erythro-6,7-dihydrobiopterin + H2O. The chain is Putative pterin-4-alpha-carbinolamine dehydratase from Rhodopseudomonas palustris (strain BisB18).